A 302-amino-acid chain; its full sequence is Trans-4-hydroxy-L-proline dehydratase activating enzyme (302 aa).

The Radical SAM core domain maps to 14–297; sequence HDGPGIRSTV…KRLFEASNFN (284 aa). The [4Fe-4S] cluster site is built by cysteine 28, cysteine 32, cysteine 35, cysteine 54, cysteine 57, cysteine 60, and cysteine 93. 34 to 36 serves as a coordination point for S-adenosyl-L-methionine; the sequence is WCH. 2 4Fe-4S ferredoxin-type domains span residues 45–74 and 75–103; these read KQVL…KGET and KICL…IVGQ. S-adenosyl-L-methionine contacts are provided by residues glycine 133, 183-185, and histidine 257; that span reads DIK.

It belongs to the organic radical-activating enzymes family. Requires [4Fe-4S] cluster as cofactor.

It carries out the reaction glycyl-[protein] + reduced [flavodoxin] + S-adenosyl-L-methionine = glycin-2-yl radical-[protein] + semiquinone [flavodoxin] + 5'-deoxyadenosine + L-methionine + H(+). Catalyzes activation of the trans-4-hydroxy-L-proline dehydratase under anaerobic conditions by generation of an organic free radical on a glycine residue, via a homolytic cleavage of S-adenosyl-L-methionine (SAM). Is involved in the anaerobic degradation of 4-hydroxyproline. The sequence is that of Trans-4-hydroxy-L-proline dehydratase activating enzyme from Clostridioides difficile (Peptoclostridium difficile).